Consider the following 297-residue polypeptide: Pantothenate synthetase (297 aa).

30–37 is a binding site for ATP; it reads MGYLHAGH. The active-site Proton donor is histidine 37. Glutamine 61 is a (R)-pantoate binding site. Beta-alanine is bound at residue glutamine 61. Position 147-150 (147-150) interacts with ATP; it reads GEKD. Glutamine 153 is a binding site for (R)-pantoate. ATP contacts are provided by residues valine 176 and 184-187; that span reads LSSR.

This sequence belongs to the pantothenate synthetase family. Homodimer.

The protein resides in the cytoplasm. The catalysed reaction is (R)-pantoate + beta-alanine + ATP = (R)-pantothenate + AMP + diphosphate + H(+). The protein operates within cofactor biosynthesis; (R)-pantothenate biosynthesis; (R)-pantothenate from (R)-pantoate and beta-alanine: step 1/1. Catalyzes the condensation of pantoate with beta-alanine in an ATP-dependent reaction via a pantoyl-adenylate intermediate. The protein is Pantothenate synthetase of Rhizobium etli (strain ATCC 51251 / DSM 11541 / JCM 21823 / NBRC 15573 / CFN 42).